The primary structure comprises 177 residues: Cytidylate kinase (177 aa).

An ATP-binding site is contributed by 7–15 (GSPGSGTTT).

The protein belongs to the cytidylate kinase family. Type 2 subfamily.

It localises to the cytoplasm. The enzyme catalyses CMP + ATP = CDP + ADP. It carries out the reaction dCMP + ATP = dCDP + ADP. In Methanocorpusculum labreanum (strain ATCC 43576 / DSM 4855 / Z), this protein is Cytidylate kinase.